The sequence spans 336 residues: Homeobox-leucine zipper protein HAT14 (336 aa).

2 disordered regions span residues 53 to 141 (RSLS…PDSV) and 160 to 194 (SNKR…KLRL). Residues 64-81 (EDEKKKPAPRAKKSDEFR) show a composition bias toward basic and acidic residues. Over residues 120-129 (VEEEEEEEEA) the composition is skewed to acidic residues. Low complexity predominate over residues 130–141 (VPSMSVSPPDSV). Residues 160–173 (SNKRDIDDEVERSA) are compositionally biased toward basic and acidic residues. Positions 187–246 (STRKKLRLSKDQSAFLEDSFKEHSTLNPKQKIALAKQLNLRPRQVEVWFQNRRARTKLKQ) form a DNA-binding region, homeobox. A leucine-zipper region spans residues 254–275 (LKRCCESLTEENRRLQKEVKEL).

It belongs to the HD-ZIP homeobox family. Class II subfamily.

The protein resides in the nucleus. Its function is as follows. Probable transcription factor. This Arabidopsis thaliana (Mouse-ear cress) protein is Homeobox-leucine zipper protein HAT14 (HAT14).